A 210-amino-acid chain; its full sequence is Somatotropin-2 (210 aa).

Residues 1–22 (MGQVFLLMPVLLVSCFLSQGAA) form the signal peptide. H38 is a Zn(2+) binding site. C71 and C183 are oxidised to a cystine. E192 contacts Zn(2+). C200 and C208 are disulfide-bonded.

The protein belongs to the somatotropin/prolactin family.

It localises to the secreted. Growth hormone plays an important role in growth control and is involved in the regulation of several anabolic processes. Implicated as an osmoregulatory substance important for seawater adaptation. This Oncorhynchus nerka (Sockeye salmon) protein is Somatotropin-2 (gh2).